The chain runs to 384 residues: Cytochrome b (384 aa).

4 helical membrane passes run 33 to 53 (YGSLLFLCLIIQIATGLFLAM), 77 to 98 (WLIRNMHANGASFFFICLYLHI), 113 to 133 (WNVGVILFLLVMMTAFVGYVL), and 178 to 198 (FFAFHFLFPFVIAAAAVIHLL). Residues His-83 and His-97 each contribute to the heme b site. The heme b site is built by His-182 and His-196. His-201 provides a ligand contact to a ubiquinone. The next 4 membrane-spanning stretches (helical) occupy residues 226-246 (YKDLLGFALMLLALTSLALFT), 288-308 (LGGVLALLFSILVLMVVPILH), 320-340 (LSQMLFWTLVADVLILTWIGG), and 347-367 (FIIIGQVASVLYFMLFLVLMP).

This sequence belongs to the cytochrome b family. The cytochrome bc1 complex contains 3 respiratory subunits (MT-CYB, CYC1 and UQCRFS1), 2 core proteins (UQCRC1 and UQCRC2) and probably 6 low-molecular weight proteins. The cofactor is heme b.

It is found in the mitochondrion inner membrane. Its function is as follows. Component of the ubiquinol-cytochrome c reductase complex (complex III or cytochrome b-c1 complex) that is part of the mitochondrial respiratory chain. The b-c1 complex mediates electron transfer from ubiquinol to cytochrome c. Contributes to the generation of a proton gradient across the mitochondrial membrane that is then used for ATP synthesis. This Anoplogaster cornuta (Common fangtooth) protein is Cytochrome b (mt-cyb).